The sequence spans 283 residues: Acetylglutamate kinase (283 aa).

Substrate-binding positions include Gly63 to Gly64, Arg85, and Asn179.

This sequence belongs to the acetylglutamate kinase family. ArgB subfamily.

The protein resides in the cytoplasm. The catalysed reaction is N-acetyl-L-glutamate + ATP = N-acetyl-L-glutamyl 5-phosphate + ADP. The protein operates within amino-acid biosynthesis; L-arginine biosynthesis; N(2)-acetyl-L-ornithine from L-glutamate: step 2/4. Its function is as follows. Catalyzes the ATP-dependent phosphorylation of N-acetyl-L-glutamate. This chain is Acetylglutamate kinase, found in Clostridium kluyveri (strain NBRC 12016).